Consider the following 82-residue polypeptide: uncharacterized protein (82 aa).

This is an uncharacterized protein from Rickettsia prowazekii (strain Madrid E).